We begin with the raw amino-acid sequence, 567 residues long: Laccase-7 (567 aa).

The first 23 residues, 1-23 (MEGVRVPIACALILLAISSITSA), serve as a signal peptide directing secretion. Plastocyanin-like domains are found at residues 31-147 (NVQN…PKSG) and 157-310 (KEVP…YGGA). Residues Asn-34, Asn-50, and Asn-77 are each glycosylated (N-linked (GlcNAc...) asparagine). Residues His-81 and His-83 each contribute to the Cu cation site. Asn-115 carries N-linked (GlcNAc...) asparagine glycosylation. Cu cation-binding residues include His-126 and His-128. 7 N-linked (GlcNAc...) asparagine glycosylation sites follow: Asn-186, Asn-298, Asn-339, Asn-374, Asn-386, Asn-427, and Asn-450. One can recognise a Plastocyanin-like 3 domain in the interval 412–551 (DFPDQPPVKF…GMIFVVKNGP (140 aa)). Residues His-468, His-471, His-473, His-530, Cys-531, His-532, and His-536 each contribute to the Cu cation site.

The protein belongs to the multicopper oxidase family. The cofactor is Cu cation. In terms of tissue distribution, predominantly expressed in tissues other than the inflorescence stem.

It is found in the secreted. The protein localises to the extracellular space. The protein resides in the apoplast. It catalyses the reaction 4 hydroquinone + O2 = 4 benzosemiquinone + 2 H2O. Functionally, lignin degradation and detoxification of lignin-derived products. This chain is Laccase-7 (LAC7), found in Arabidopsis thaliana (Mouse-ear cress).